We begin with the raw amino-acid sequence, 536 residues long: Xylulose kinase (536 aa).

Substrate is bound by residues histidine 99, arginine 170, aspartate 280, and asparagine 281. Residues tryptophan 355, 441–442 (GA), and asparagine 445 each bind ATP.

This sequence belongs to the FGGY kinase family. Monomer.

It carries out the reaction D-xylulose + ATP = D-xylulose 5-phosphate + ADP + H(+). In terms of biological role, phosphorylates D-xylulose to produce D-xylulose 5-phosphate, a molecule that may play an important role in the regulation of glucose metabolism and lipogenesis. This is Xylulose kinase (Xylb) from Rattus norvegicus (Rat).